A 174-amino-acid polypeptide reads, in one-letter code: Mediator of RNA polymerase II transcription subunit 30 (174 aa).

A coiled-coil region spans residues 113–166 (VEDDSSKLEDRMANQLRAASEERREVLEVNKKLKQKNQQLKMIMDQLRNLIWEI).

Belongs to the Mediator complex subunit 30 family. As to quaternary structure, component of the Mediator complex.

It is found in the nucleus. Its function is as follows. Component of the Mediator complex, a coactivator involved in the regulated transcription of nearly all RNA polymerase II-dependent genes. Mediator functions as a bridge to convey information from gene-specific regulatory proteins to the basal RNA polymerase II transcription machinery. Mediator is recruited to promoters by direct interactions with regulatory proteins and serves as a scaffold for the assembly of a functional preinitiation complex with RNA polymerase II and the general transcription factors. The chain is Mediator of RNA polymerase II transcription subunit 30 (med30) from Danio rerio (Zebrafish).